The chain runs to 767 residues: Serine/threonine-protein kinase DCLK2 (767 aa).

The interval 1-44 (MASTRSIELEHFEERDKRPRPGSRRGAPSSSGGSSISGPKGNGL) is disordered. Residues 7-19 (IELEHFEERDKRP) are compositionally biased toward basic and acidic residues. Residues 24–43 (RRGAPSSSGGSSISGPKGNG) are compositionally biased toward low complexity. T61 bears the Phosphothreonine mark. 2 Doublecortin domains span residues 72–158 (KKAR…VDYT) and 196–279 (KLVT…AQDD). Low complexity predominate over residues 301–311 (KYSGSRSPGLS). The segment at 301 to 391 (KYSGSRSPGL…GPELDRCMSP (91 aa)) is disordered. Over residues 327-338 (SAYSTAKSPVNG) the composition is skewed to polar residues. Residues 339-362 (TPSSQLSTPKSTKSSSSSPTSPGS) show a composition bias toward low complexity. Residues 369 to 380 (ISAQGRSSSNVN) show a composition bias toward polar residues. At S377 the chain carries Phosphoserine. One can recognise a Protein kinase domain in the interval 409-666 (YRIGKVIGDG…AGEILSHPWV (258 aa)). Residues 415-423 (IGDGNFAVV) and K438 each bind ATP. D530 functions as the Proton acceptor in the catalytic mechanism. S662 carries the post-translational modification Phosphoserine. T681 bears the Phosphothreonine mark. Residues 721–734 (HCRDSSKSSREQTS) show a composition bias toward basic and acidic residues. Residues 721 to 767 (HCRDSSKSSREQTSAREAPPPPESPRPPGPPATSGCDPAGTWRRHRD) form a disordered region. Pro residues predominate over residues 738–751 (APPPPESPRPPGPP).

It belongs to the protein kinase superfamily. CAMK Ser/Thr protein kinase family. CaMK subfamily. As to quaternary structure, interacts with MAPK8IP1/JIP-1, MAPK8IP2/JIP-2, MAPK9/JNK2, PPP1R9B/NEURABIN-2 and actin. Binds to and stabilizes microtubules; binding affinity is strongly reduced by autophosphorylation. Autophosphorylated.

The protein localises to the cytoplasm. It is found in the cytoskeleton. It carries out the reaction L-seryl-[protein] + ATP = O-phospho-L-seryl-[protein] + ADP + H(+). The enzyme catalyses L-threonyl-[protein] + ATP = O-phospho-L-threonyl-[protein] + ADP + H(+). In terms of biological role, protein kinase with a significantly reduced Ca(2+)+/CAM affinity and dependence compared to other members of the CaMK family. May play a role in the down-regulation of CRE-dependent gene activation probably by phosphorylation of the CREB coactivator CRTC2/TORC2 and the resulting retention of TORC2 in the cytoplasm. In Rattus norvegicus (Rat), this protein is Serine/threonine-protein kinase DCLK2 (Dclk2).